A 139-amino-acid polypeptide reads, in one-letter code: MRTLWIMAVLLVGVEGNLVQFETLIMKIAGRSGVWYYGSYGCYCGSGGQGRPQDASDRCCFVHDCCYGKVTDCDPKADVYTYSEENGVVVCGGDDPCKKQICEVRQGCGNLLPRHKDTYEHNILVFPAKTFAKKESEPC.

Residues 1–16 form the signal peptide; sequence MRTLWIMAVLLVGVEG. A disulfide bridge connects residues C44 and C60. 2 residues coordinate Ca(2+): G45 and G47. The active site involves H63. D64 provides a ligand contact to Ca(2+). Cystine bridges form between C65/C139, C73/C97, and C91/C102.

The protein belongs to the phospholipase A2 family. Group II subfamily. D49 sub-subfamily. Requires Ca(2+) as cofactor. As to expression, expressed by the venom gland.

The protein resides in the secreted. It carries out the reaction a 1,2-diacyl-sn-glycero-3-phosphocholine + H2O = a 1-acyl-sn-glycero-3-phosphocholine + a fatty acid + H(+). Its function is as follows. PLA2 catalyzes the calcium-dependent hydrolysis of the 2-acyl groups in 3-sn-phosphoglycerides. The chain is Acidic phospholipase A2 BpPLA2-TXI from Bothrops pauloensis (Neuwied's lancehead).